Here is a 101-residue protein sequence, read N- to C-terminus: Chaperone modulatory protein CbpM (101 aa).

It belongs to the CbpM family.

Its function is as follows. Interacts with CbpA and inhibits both the DnaJ-like co-chaperone activity and the DNA binding activity of CbpA. Together with CbpA, modulates the activity of the DnaK chaperone system. Does not inhibit the co-chaperone activity of DnaJ. The protein is Chaperone modulatory protein CbpM of Pseudomonas putida (strain W619).